A 170-amino-acid polypeptide reads, in one-letter code: Ubiquitin-conjugating enzyme E2 2 (170 aa).

The region spanning Pro4 to Glu150 is the UBC core domain. Catalysis depends on Cys88, which acts as the Glycyl thioester intermediate. Positions Ser148–Asp170 are disordered. The span at Asp152–Asp170 shows a compositional bias: acidic residues.

The protein belongs to the ubiquitin-conjugating enzyme family.

It is found in the cytoplasm. It localises to the nucleus. The enzyme catalyses S-ubiquitinyl-[E1 ubiquitin-activating enzyme]-L-cysteine + [E2 ubiquitin-conjugating enzyme]-L-cysteine = [E1 ubiquitin-activating enzyme]-L-cysteine + S-ubiquitinyl-[E2 ubiquitin-conjugating enzyme]-L-cysteine.. It functions in the pathway protein modification; protein ubiquitination. In terms of biological role, catalyzes the covalent attachment of ubiquitin to other proteins. Plays a role in transcription regulation by catalyzing the monoubiquitination of histone H2B to form H2BK123ub1. H2BK123ub1 gives a specific tag for epigenetic transcriptional activation and is also a prerequisite for H3K4me and H3K79me formation. Also involved in postreplication repair of UV-damaged DNA, in N-end rule-dependent protein degradation and in sporulation. The polypeptide is Ubiquitin-conjugating enzyme E2 2 (UBC2) (Eremothecium gossypii (strain ATCC 10895 / CBS 109.51 / FGSC 9923 / NRRL Y-1056) (Yeast)).